A 348-amino-acid chain; its full sequence is Protein pof5 (348 aa).

This sequence to yeast YDR306C. As to quaternary structure, interacts with skp1.

Its subcellular location is the mitochondrion. The protein is Protein pof5 (pof5) of Schizosaccharomyces pombe (strain 972 / ATCC 24843) (Fission yeast).